A 116-amino-acid polypeptide reads, in one-letter code: Tyrosine-protein phosphatase 10 (116 aa).

One can recognise a Tyrosine-protein phosphatase domain in the interval 1 to 116 (WRMVWEQNVS…SPTGYGPIVV (116 aa)). D86 contributes to the substrate binding site.

Belongs to the protein-tyrosine phosphatase family.

The enzyme catalyses O-phospho-L-tyrosyl-[protein] + H2O = L-tyrosyl-[protein] + phosphate. The protein is Tyrosine-protein phosphatase 10 (STY-10) of Styela plicata (Wrinkled sea squirt).